Consider the following 1364-residue polypeptide: Outer kinetochore KNL1 complex subunit spc7 (1364 aa).

The segment covering methionine 1 to asparagine 15 has biased composition (polar residues). 3 disordered regions span residues methionine 1–glutamine 36, tyrosine 124–serine 190, and glutamate 202–glutamine 223. The span at tyrosine 124 to threonine 136 shows a compositional bias: basic and acidic residues. Residues glycine 157–glutamine 169 show a composition bias toward polar residues. A compositionally biased stretch (low complexity) spans serine 170 to serine 181. Residues methionine 254–threonine 257 carry the MELT; degenerate motif. Threonine 257 carries the phosphothreonine; by mph1 modification. The interval alanine 289–aspartate 334 is disordered. The segment covering serine 300–serine 310 has biased composition (low complexity). Residues lysine 318 to asparagine 328 show a composition bias toward basic and acidic residues. The short motif at methionine 450–threonine 453 is the MELT; degenerate element. Threonine 453 is subject to Phosphothreonine; by mph1. The segment at isoleucine 456 to phenylalanine 503 is disordered. Over residues asparagine 471 to serine 481 the composition is skewed to polar residues. The MELT; degenerate motif lies at methionine 504–threonine 507. Threonine 507 carries the phosphothreonine; by mph1 modification. 2 disordered regions span residues leucine 564–aspartate 643 and glycine 697–asparagine 837. The segment covering serine 566 to glutamate 585 has biased composition (basic and acidic residues). Polar residues predominate over residues asparagine 586–serine 617. Residues glutamate 719–glutamate 730 are compositionally biased toward basic and acidic residues. A compositionally biased stretch (polar residues) spans leucine 747 to serine 773. Basic and acidic residues predominate over residues serine 791 to arginine 802. The segment covering valine 808–glycine 820 has biased composition (polar residues). The stretch at leucine 1075–glutamate 1155 forms a coiled coil. The Nuclear localization signal motif lies at arginine 1091 to glutamate 1105.

Component of the KNL1/SPC105 complex composed of at least spc7 and sos7. Part of the outer kinetochore KMN network that includes the KNL1, MIS12 and NDC80 complexes. Interacts (via C-terminus) with sos7 (via C-terminus); the interaction is direct. Interacts (when phosphorylated on MELT motifs) with bub1 and bub3; to recruit the BUB1-BUB3 complex to the kinetochore. In terms of processing, phosphorylation of threonine residues in the MELT motifs by mph1/mps1 leads to recruitment of bub1 and bub3 to the kinetochore, and is required to maintain spindle assembly checkpoint signaling.

The protein localises to the nucleus. It localises to the chromosome. It is found in the centromere. Its subcellular location is the kinetochore. Acts as a component of the outer kinetochore KNL1 complex that serves as a docking point for spindle assembly checkpoint components and mediates microtubule-kinetochore interactions. Kinetochores, consisting of a centromere-associated inner segment and a microtubule-contacting outer segment, play a crucial role in chromosome segregation by mediating the physical connection between centromeric DNA and spindle microtubules. The outer kinetochore is made up of the ten-subunit KMN network, comprising the MIS12, NDC80 and KNL1 complexes, and auxiliary microtubule-associated components; together they connect the outer kinetochore with the inner kinetochore, bind microtubules, and mediate interactions with mitotic checkpoint proteins that delay anaphase until chromosomes are bioriented on the spindle. Recruits the BUB1-BUB3 complex to kinetochores when phosphorylated by mph1/mps1, to support spindle assembly checkpoint signaling. Functions both in mitotic and in meiotic chromosome segregation. In Schizosaccharomyces pombe (strain 972 / ATCC 24843) (Fission yeast), this protein is Outer kinetochore KNL1 complex subunit spc7.